Here is a 115-residue protein sequence, read N- to C-terminus: Large ribosomal subunit protein bL19 (115 aa).

The protein belongs to the bacterial ribosomal protein bL19 family.

Functionally, this protein is located at the 30S-50S ribosomal subunit interface and may play a role in the structure and function of the aminoacyl-tRNA binding site. The sequence is that of Large ribosomal subunit protein bL19 from Clostridium perfringens (strain ATCC 13124 / DSM 756 / JCM 1290 / NCIMB 6125 / NCTC 8237 / Type A).